We begin with the raw amino-acid sequence, 302 residues long: Bifunctional protein FolD 2 (302 aa).

Residues 170-172 (GRS), Ser195, and Ile236 each bind NADP(+).

The protein belongs to the tetrahydrofolate dehydrogenase/cyclohydrolase family. Homodimer.

It catalyses the reaction (6R)-5,10-methylene-5,6,7,8-tetrahydrofolate + NADP(+) = (6R)-5,10-methenyltetrahydrofolate + NADPH. It carries out the reaction (6R)-5,10-methenyltetrahydrofolate + H2O = (6R)-10-formyltetrahydrofolate + H(+). It functions in the pathway one-carbon metabolism; tetrahydrofolate interconversion. Catalyzes the oxidation of 5,10-methylenetetrahydrofolate to 5,10-methenyltetrahydrofolate and then the hydrolysis of 5,10-methenyltetrahydrofolate to 10-formyltetrahydrofolate. This Paracoccus denitrificans (strain Pd 1222) protein is Bifunctional protein FolD 2.